Here is a 394-residue protein sequence, read N- to C-terminus: Zinc finger and SCAN domain-containing protein 9 (394 aa).

A Glycyl lysine isopeptide (Lys-Gly) (interchain with G-Cter in SUMO2) cross-link involves residue Lys26. The 83-residue stretch at 52–134 (RRHFRQLCYQ…ILLEDLEREL (83 aa)) folds into the SCAN box domain. Glycyl lysine isopeptide (Lys-Gly) (interchain with G-Cter in SUMO2) cross-links involve residues Lys215 and Lys238. C2H2-type zinc fingers lie at residues 254–276 (HKCDECGKSFTQSSGLIRHQRIH), 282–304 (YECNECGKAFSRSSGLFNHRGIH), 310–332 (YHCKECGKVFSQSAGLIQHQRIH), 338–360 (YQCSQCSKSYSRRSFLIEHQRSH), and 366–388 (HQCIECGKSFNRHCNLIRHQKIH).

This sequence belongs to the krueppel C2H2-type zinc-finger protein family.

It localises to the nucleus. In terms of biological role, may be involved in transcriptional regulation. This Homo sapiens (Human) protein is Zinc finger and SCAN domain-containing protein 9 (ZSCAN9).